We begin with the raw amino-acid sequence, 293 residues long: Rhomboid-like protease 1 (293 aa).

Positions 18-40 are disordered; the sequence is EHTPLYNAETGSRDSDSTSSGGA. The next 6 helical transmembrane spans lie at 62-82, 112-132, 148-168, 174-194, 217-237, and 262-282; these read VVLA…CLDT, LLLP…VFFQ, FTGL…TAFF, VGAS…MALT, LLMF…GGLL, and AAAI…LYAV. The active-site Nucleophile is S177. H232 is a catalytic residue.

The protein belongs to the peptidase S54 family.

It localises to the cytoplasmic vesicle. The protein resides in the secretory vesicle. It is found in the microneme membrane. The catalysed reaction is Cleaves type-1 transmembrane domains using a catalytic dyad composed of serine and histidine that are contributed by different transmembrane domains.. Functionally, serine protease involved in intramembrane proteolysis and the subsequent release of polypeptides from their membrane anchors. Has no detectable activity towards MIC2. In Toxoplasma gondii, this protein is Rhomboid-like protease 1 (ROM1).